The chain runs to 130 residues: Small ribosomal subunit protein uS8 (130 aa).

Belongs to the universal ribosomal protein uS8 family. Part of the 30S ribosomal subunit. Contacts proteins S5 and S12.

In terms of biological role, one of the primary rRNA binding proteins, it binds directly to 16S rRNA central domain where it helps coordinate assembly of the platform of the 30S subunit. This Shewanella sediminis (strain HAW-EB3) protein is Small ribosomal subunit protein uS8.